A 423-amino-acid chain; its full sequence is Mannan endo-1,4-beta-mannosidase (423 aa).

Positions 1-27 (MKTITTARLPWAAQSFALGICLIALLG) are cleaved as a signal peptide. In terms of domain architecture, GH26 spans 56–409 (METRSLFAFM…YADEFTAFNR (354 aa)). Residues E121, H143, and W162 each coordinate substrate. E212 (proton donor) is an active-site residue. Substrate is bound by residues W217 and Y285. Catalysis depends on E320, which acts as the Nucleophile. Residues 360-361 (WR) and H377 contribute to the substrate site.

It belongs to the glycosyl hydrolase 26 family. In terms of assembly, homodimer.

It catalyses the reaction Random hydrolysis of (1-&gt;4)-beta-D-mannosidic linkages in mannans, galactomannans and glucomannans.. In terms of biological role, catalyzes the endo hydrolysis of beta-1,4-linked mannan and galactomannan, but displays little activity towards other polysaccharides located in the plant cell wall. Preferentially hydrolyzes the larger oligosaccharides and has greater activity against non-substituted polysaccharides. It displays tight specificity for mannose at both the -2 and the -1 subsites. Appears to act in synergy with alpha-galactosidase (AgaA) to elicit hydrolysis of galactomannan. The protein is Mannan endo-1,4-beta-mannosidase of Cellvibrio japonicus (strain Ueda107) (Pseudomonas fluorescens subsp. cellulosa).